Reading from the N-terminus, the 545-residue chain is Chaperonin GroEL 5 (545 aa).

ATP-binding positions include 30 to 33 (TLGP), Lys-51, 87 to 91 (DGTTT), Gly-415, and Asp-495.

This sequence belongs to the chaperonin (HSP60) family. Forms a cylinder of 14 subunits composed of two heptameric rings stacked back-to-back. Interacts with the co-chaperonin GroES.

It localises to the cytoplasm. The catalysed reaction is ATP + H2O + a folded polypeptide = ADP + phosphate + an unfolded polypeptide.. In terms of biological role, together with its co-chaperonin GroES, plays an essential role in assisting protein folding. The GroEL-GroES system forms a nano-cage that allows encapsulation of the non-native substrate proteins and provides a physical environment optimized to promote and accelerate protein folding. The sequence is that of Chaperonin GroEL 5 from Sinorhizobium medicae (strain WSM419) (Ensifer medicae).